Reading from the N-terminus, the 164-residue chain is 17.8 kDa heat shock protein (164 aa).

The region spanning 20-154 is the sHSP domain; it reads VVAGEARPPM…HAGNGKAAGD (135 aa). Residues 68–93 are disordered; the sequence is GEHEDANNAAKAGKASGEEEEENDGV.

The protein belongs to the small heat shock protein (HSP20) family. As to quaternary structure, may form oligomeric structures.

The protein resides in the cytoplasm. The polypeptide is 17.8 kDa heat shock protein (HSP17.8) (Oryza sativa subsp. japonica (Rice)).